The primary structure comprises 224 residues: Ribonuclease T (224 aa).

The region spanning 32-206 (VVVDVETGGF…YDTEKTAELF (175 aa)) is the Exonuclease domain. 4 residues coordinate Mg(2+): Asp35, Glu37, His193, and Asp198. His193 serves as the catalytic Proton donor/acceptor.

The protein belongs to the RNase T family. Homodimer. It depends on Mg(2+) as a cofactor.

In terms of biological role, trims short 3' overhangs of a variety of RNA species, leaving a one or two nucleotide 3' overhang. Responsible for the end-turnover of tRNA: specifically removes the terminal AMP residue from uncharged tRNA (tRNA-C-C-A). Also appears to be involved in tRNA biosynthesis. This chain is Ribonuclease T, found in Pseudomonas aeruginosa (strain UCBPP-PA14).